The following is a 424-amino-acid chain: T-DNA border endonuclease VirD2 (424 aa).

2 disordered regions span residues 206–269 and 321–424; these read AQKI…GSSI and RPVT…RGGT. Residues 212–221 are compositionally biased toward acidic residues; the sequence is EDTDFDETSP. Residues 243 to 261 are compositionally biased toward basic and acidic residues; that stretch reads EPDRATRHDKQPLEQHARF. The segment covering 330–339 has biased composition (basic residues); sequence TVKRQQRSKR. 2 stretches are compositionally biased toward basic and acidic residues: residues 394–408 and 415–424; these read SPKR…ELGG and NRRDDGRGGT.

Tumor formation by A.tumefaciens involves the transfer and integration of a defined segment (T-DNA) of Ti plasmid DNA into the plant nuclear genome. The virD operon encodes a site-specific endonuclease that cleaves at a unique site within both 24 bp direct repeats flanking the T-DNA. This chain is T-DNA border endonuclease VirD2 (virD2), found in Rhizobium radiobacter (Agrobacterium tumefaciens).